Here is a 358-residue protein sequence, read N- to C-terminus: Alanine racemase (358 aa).

Catalysis depends on Lys35, which acts as the Proton acceptor; specific for D-alanine. The residue at position 35 (Lys35) is an N6-(pyridoxal phosphate)lysine. Residue Arg130 coordinates substrate. The active-site Proton acceptor; specific for L-alanine is Tyr255. Met303 is a binding site for substrate.

Belongs to the alanine racemase family. Pyridoxal 5'-phosphate serves as cofactor.

It catalyses the reaction L-alanine = D-alanine. It functions in the pathway amino-acid biosynthesis; D-alanine biosynthesis; D-alanine from L-alanine: step 1/1. Functionally, catalyzes the interconversion of L-alanine and D-alanine. May also act on other amino acids. The sequence is that of Alanine racemase (alr) from Shewanella woodyi (strain ATCC 51908 / MS32).